The sequence spans 613 residues: Ribosome-associated molecular chaperone SSB1 (613 aa).

The interval 1-391 (MAEGVFQGAI…ILTGQSTSED (391 aa)) is nucleotide binding domain (NBD). ATP contacts are provided by residues 16 to 18 (TTY), K73, 205 to 207 (GGT), 271 to 278 (ERAKRTLS), and G342. The segment at 392 to 402 (TKDLLLLDVAP) is inter-domain linker. The interval 403 to 613 (LSLGVGMQGD…RVVTKAMSSR (211 aa)) is substrate binding domain (SBD). Residues 516 to 612 (SDEIEKMVNQ…KRVVTKAMSS (97 aa)) are lid domain (SBDalpha). Positions 574-582 (IESALSDAL) match the Nuclear export signal motif.

The protein belongs to the heat shock protein 70 family. Ssb-type Hsp70 subfamily. As to quaternary structure, binds to ribosomes. Binds close to the ribosomal tunnel exit via contacts with both ribosomal proteins and rRNA. Directly interacts with nascent polypeptides. This interaction is dependent on the ribosome-associated complex (RAC). Interacts with SSE1. Interacts with FES1.

The protein resides in the cytoplasm. The catalysed reaction is ATP + H2O = ADP + phosphate + H(+). Its function is as follows. Ribosome-bound, Hsp70-type chaperone that assists in the cotranslational folding of newly synthesized proteins in the cytosol. Stimulates folding by interacting with nascent chains, binding to short, largely hydrophobic sequences exposed by unfolded proteins, thereby stabilizing longer, more slowly translated, and aggregation-prone nascent polypeptides and domains that cannot fold stably until fully synthesized. The Hsp70-protein substrate interaction depends on ATP-binding and on allosteric regulation between the NBD and the SBD. The ATP-bound state is characterized by a fast exchange rate of substrate (low affinity state), while in the ADP-bound state exchange is much slower (high affinity state). During the Hsp70 cycle, the chaperone switches between the ATP-bound state (open conformation) and the ADP-bound state (closed conformation) by major conformational rearrangements involving mainly the lid domain. Ssb cooperates with a specific Hsp40/Hsp70 co-chaperone termed the ribosome-associated complex (RAC), which stimulates the ATPase activity of the ribosome-associated pool of Ssbs and switches it to the high affinity substrate binding state. Hsp110 chaperone SSE1 and FES1 act as nucleotide exchange factors that cause substrate release. This chain is Ribosome-associated molecular chaperone SSB1 (SSB1), found in Zygosaccharomyces rouxii (strain ATCC 2623 / CBS 732 / NBRC 1130 / NCYC 568 / NRRL Y-229).